The sequence spans 125 residues: Mite group 2 allergen Gly d 2.02 (125 aa).

The protein belongs to the NPC2 family.

It localises to the secreted. The chain is Mite group 2 allergen Gly d 2.02 from Glycyphagus domesticus (House itch mite).